Reading from the N-terminus, the 249-residue chain is tRNA 2'-phosphotransferase 1 (249 aa).

M1 is subject to N-acetylmethionine. 2 disordered regions span residues 1 to 25 (MNAP…RNVQ) and 220 to 249 (KPLS…KIQQ).

It belongs to the KptA/TPT1 family.

It catalyses the reaction 2'-phospho-[ligated tRNA] + NAD(+) = mature tRNA + ADP-alpha-D-ribose 1'',2''-cyclic phosphate + nicotinamide. In terms of biological role, catalyzes the last step of tRNA splicing, the transfer of the splice junction 2'-phosphate from ligated tRNA to NAD to produce ADP-ribose 1''-2'' cyclic phosphate. The protein is tRNA 2'-phosphotransferase 1 (Trpt1) of Mus musculus (Mouse).